The chain runs to 376 residues: Zinc finger CCCH domain-containing protein C337.12 (376 aa).

Residues 2–25 adopt a coiled-coil conformation; it reads NEQQLLENIASLAGAINQYKNEKE. The tract at residues 60 to 95 is disordered; the sequence is SKSTAASPPYVIPSTSSNADDANKEPEKQSTSDYVS. The span at 80–89 shows a compositional bias: basic and acidic residues; sequence DANKEPEKQS. The stretch at 105 to 140 forms a coiled coil; the sequence is KKNILEHDLQARKANLESYRAKLEKEYKTLAENKIQ. 4 consecutive C3H1-type zinc fingers follow at residues 202-228, 229-256, 257-283, and 284-312; these read SPSA…FVHE, PTRK…HELD, PRRI…HIHY, and SENA…HILQ. Residues 347–376 form a disordered region; it reads SKTAGSINPEDSGSEIGSNSLESNLDFISV. Polar residues predominate over residues 349-369; it reads TAGSINPEDSGSEIGSNSLES.

It localises to the nucleus. The chain is Zinc finger CCCH domain-containing protein C337.12 from Schizosaccharomyces pombe (strain 972 / ATCC 24843) (Fission yeast).